A 168-amino-acid chain; its full sequence is Phosphopantetheine adenylyltransferase (168 aa).

T14 contacts substrate. Residues 14–15 and H22 contribute to the ATP site; that span reads TF. Positions 46, 78, and 92 each coordinate substrate. ATP contacts are provided by residues 93–95, E103, and 128–134; these read GLR and YSFISSS.

This sequence belongs to the bacterial CoaD family. Homohexamer. Mg(2+) is required as a cofactor.

Its subcellular location is the cytoplasm. It carries out the reaction (R)-4'-phosphopantetheine + ATP + H(+) = 3'-dephospho-CoA + diphosphate. The protein operates within cofactor biosynthesis; coenzyme A biosynthesis; CoA from (R)-pantothenate: step 4/5. Functionally, reversibly transfers an adenylyl group from ATP to 4'-phosphopantetheine, yielding dephospho-CoA (dPCoA) and pyrophosphate. The protein is Phosphopantetheine adenylyltransferase of Xanthomonas oryzae pv. oryzae (strain MAFF 311018).